Consider the following 404-residue polypeptide: O-antigen ligase (404 aa).

The next 11 helical transmembrane spans lie at 16–32, 39–55, 67–84, 96–115, 127–147, 168–183, 189–221, 228–246, 324–343, 363–379, and 385–401; these read IWNK…YFLD, HLII…QVSR, SVFY…YSIL, FENT…PVLL, VLFS…ILYI, SMVF…WLFR, LVFL…GVLW, WKLI…ALVI, ILYI…VYLY, YNAH…FYIV, and QVDI…LLAL.

It belongs to the O-antigen ligase family.

Its subcellular location is the cell inner membrane. It carries out the reaction a lipid-linked O antigen + a lipid A-core oligosaccharide = a lipopolysaccharide + a polyisoprenyl diphosphate.. It participates in bacterial outer membrane biogenesis; lipopolysaccharide biosynthesis. Functionally, transferase involved in the biosynthesis of the lipopolysaccharide (LPS). Catalyzes the transfer of a polymerized O-antigen molecule from its polyprenyl diphosphate membrane anchor to a terminal sugar of the lipid A-core oligosaccharide, finalizing the biosynthesis of the lipopolysaccharide. May also be involved in a feedback mechanism to regulate O-unit synthesis, based on the availability of O units on the periplasmic face of the membrane. The sequence is that of O-antigen ligase from Salmonella typhimurium (strain LT2 / SGSC1412 / ATCC 700720).